Here is a 513-residue protein sequence, read N- to C-terminus: ATP synthase subunit alpha (513 aa).

Residue 169–176 participates in ATP binding; the sequence is GDRQIGKT.

This sequence belongs to the ATPase alpha/beta chains family. As to quaternary structure, F-type ATPases have 2 components, CF(1) - the catalytic core - and CF(0) - the membrane proton channel. CF(1) has five subunits: alpha(3), beta(3), gamma(1), delta(1), epsilon(1). CF(0) has three main subunits: a(1), b(2) and c(9-12). The alpha and beta chains form an alternating ring which encloses part of the gamma chain. CF(1) is attached to CF(0) by a central stalk formed by the gamma and epsilon chains, while a peripheral stalk is formed by the delta and b chains.

The protein localises to the cell inner membrane. The catalysed reaction is ATP + H2O + 4 H(+)(in) = ADP + phosphate + 5 H(+)(out). Its function is as follows. Produces ATP from ADP in the presence of a proton gradient across the membrane. The alpha chain is a regulatory subunit. The sequence is that of ATP synthase subunit alpha from Shewanella woodyi (strain ATCC 51908 / MS32).